A 170-amino-acid chain; its full sequence is Myosin regulatory light chain 2, skeletal muscle isoform type 1 (170 aa).

A N,N,N-trimethylalanine modification is found at alanine 2. Residues serine 16 and serine 17 each carry the phosphoserine modification. 2 positions are modified to phosphothreonine: threonine 26 and threonine 36. The EF-hand 1 domain occupies 26-61 (TQIQEFKEAFTVIDQNRDGIIDKEDLRDTFAAMGRL). Aspartate 39, asparagine 41, aspartate 43, and aspartate 50 together coordinate Ca(2+). Serine 76 is subject to Phosphoserine. EF-hand domains are found at residues 96-131 (DPEDVITGAFKVLDPEGKGTIKKQFLEELLITQCDR) and 132-167 (FSQEEIKNMWAAFSPDVGGNVDYKNICYVITHGDAK). A Phosphothreonine modification is found at threonine 102.

In terms of assembly, myosin is a hexamer of 2 heavy chains and 4 light chains.

The polypeptide is Myosin regulatory light chain 2, skeletal muscle isoform type 1 (Oryctolagus cuniculus (Rabbit)).